Consider the following 400-residue polypeptide: 3-hydroxykynurenine transaminase (400 aa).

The segment at Ser43–Asn44 is binds to and confers specificity for 3-hydroxykynurenine; shared with dimeric partner. Residues Ser77–His79, Ser154, and Gln204 contribute to the pyridoxal 5'-phosphate site. Residue Ser154 participates in substrate binding. Lys205 carries the N6-(pyridoxal phosphate)lysine modification. 2 residues coordinate pyridoxal 5'-phosphate: Tyr256 and Thr259. Arg356 contributes to the substrate binding site.

Belongs to the class-V pyridoxal-phosphate-dependent aminotransferase family. Homodimer. May form homotetramer. The cofactor is pyridoxal 5'-phosphate.

Its subcellular location is the peroxisome. The enzyme catalyses glyoxylate + L-alanine = glycine + pyruvate. It catalyses the reaction L-kynurenine + glyoxylate = kynurenate + glycine + H2O. It carries out the reaction 3-hydroxy-L-kynurenine + glyoxylate = xanthurenate + glycine + H2O. The catalysed reaction is 3-hydroxy-L-kynurenine + pyruvate = xanthurenate + L-alanine + H2O. The enzyme catalyses L-kynurenine + pyruvate = kynurenate + L-alanine + H2O. It catalyses the reaction 2-oxobutanoate + L-alanine = (2S)-2-aminobutanoate + pyruvate. It carries out the reaction L-phenylalanine + pyruvate = 3-phenylpyruvate + L-alanine. The catalysed reaction is L-serine + pyruvate = 3-hydroxypyruvate + L-alanine. The enzyme catalyses L-cysteine + pyruvate = 2-oxo-3-sulfanylpropanoate + L-alanine. It catalyses the reaction 3-hydroxy-L-kynurenine + oxaloacetate = 4-(2-amino-3-hydroxyphenyl)-2,4-dioxobutanoate + L-aspartate. It carries out the reaction 3-hydroxy-L-kynurenine + 3-phenylpyruvate = 4-(2-amino-3-hydroxyphenyl)-2,4-dioxobutanoate + L-phenylalanine. The catalysed reaction is L-kynurenine + oxaloacetate = 4-(2-aminophenyl)-2,4-dioxobutanoate + L-aspartate. The enzyme catalyses 3-phenylpyruvate + L-kynurenine = 4-(2-aminophenyl)-2,4-dioxobutanoate + L-phenylalanine. It participates in amino-acid degradation; L-kynurenine degradation; kynurenate from L-kynurenine: step 1/2. Catalyzes the pyridoxal 5'-phosphate-dependent transamination of both 3-hydroxykynurenine and L-kynurenine to xanthurenic acid and kynurenic acid, respectively, preferentially using the alpha-ketoacid pyruvate, glyoxylate or oxaloacetate as the amino group acceptor. The affinity and catalytic efficiency for 3-hydroxykynurenine is higher than for L-kynurenine. Involved in the detoxification of cytotoxic metabolite 3-hydroxykynurenine generated by the hydroxylation of L-kynurenine, an intermediate in the tryptophan catabolism pathway. Also catalyzes, although with a lesser efficiency, the transamination of alanine with glyoxylate as an amino group acceptor. May play a role in the detoxification of glyoxylate, a toxic plant metabolite from the diet. This is 3-hydroxykynurenine transaminase from Aedes aegypti (Yellowfever mosquito).